A 344-amino-acid polypeptide reads, in one-letter code: Anthranilate phosphoribosyltransferase (344 aa).

5-phospho-alpha-D-ribose 1-diphosphate is bound by residues Gly86, Gly89–Asp90, Thr94, Asn96–Thr99, Lys114–Gly122, and Ser126. Residue Gly86 participates in anthranilate binding. Residue Ser98 coordinates Mg(2+). Asn117 is an anthranilate binding site. Arg172 is an anthranilate binding site. Residues Asp231 and Glu232 each coordinate Mg(2+).

It belongs to the anthranilate phosphoribosyltransferase family. As to quaternary structure, homodimer. It depends on Mg(2+) as a cofactor.

It carries out the reaction N-(5-phospho-beta-D-ribosyl)anthranilate + diphosphate = 5-phospho-alpha-D-ribose 1-diphosphate + anthranilate. It participates in amino-acid biosynthesis; L-tryptophan biosynthesis; L-tryptophan from chorismate: step 2/5. Functionally, catalyzes the transfer of the phosphoribosyl group of 5-phosphorylribose-1-pyrophosphate (PRPP) to anthranilate to yield N-(5'-phosphoribosyl)-anthranilate (PRA). The protein is Anthranilate phosphoribosyltransferase of Prochlorococcus marinus (strain MIT 9301).